Here is a 318-residue protein sequence, read N- to C-terminus: Pantothenate kinase (318 aa).

96–103 (GSVAVGKS) is a binding site for ATP.

Belongs to the prokaryotic pantothenate kinase family.

It is found in the cytoplasm. The enzyme catalyses (R)-pantothenate + ATP = (R)-4'-phosphopantothenate + ADP + H(+). It functions in the pathway cofactor biosynthesis; coenzyme A biosynthesis; CoA from (R)-pantothenate: step 1/5. This is Pantothenate kinase from Coxiella burnetii (strain CbuK_Q154) (Coxiella burnetii (strain Q154)).